Reading from the N-terminus, the 341-residue chain is L-amino acid-D/L-Glu epimerase (341 aa).

Substrate is bound by residues Thr132 and Lys157–Lys159. Mg(2+) contacts are provided by Asp186, Glu212, and Asp237. Substrate contacts are provided by residues Lys261 and Asp315–Asp317.

Belongs to the mandelate racemase/muconate lactonizing enzyme family. Requires Mg(2+) as cofactor.

In terms of biological role, catalyzes the epimerization of dipeptides with L-Glu in the second position. Has epimerase activity with L-Gly-L-Glu, L-Ala-L-Glu, L-Ser-L-Glu, L-Pro-L-Glu, L-Val-L-Glu, L-Met-L-Glu, L-Thr-L-Glu and L-Phe-L-Glu (in vitro). This Sulfurimonas denitrificans (strain ATCC 33889 / DSM 1251) (Thiomicrospira denitrificans (strain ATCC 33889 / DSM 1251)) protein is L-amino acid-D/L-Glu epimerase.